We begin with the raw amino-acid sequence, 142 residues long: uncharacterized protein (142 aa).

Helical transmembrane passes span 3–23 (LIFI…FNLL), 30–50 (SVSW…AVWI), and 91–111 (FFLL…AYFS).

The protein localises to the membrane. This is an uncharacterized protein from Saccharomyces cerevisiae (strain ATCC 204508 / S288c) (Baker's yeast).